The chain runs to 92 residues: Small ribosomal subunit protein uS19 (92 aa).

Belongs to the universal ribosomal protein uS19 family.

Functionally, protein S19 forms a complex with S13 that binds strongly to the 16S ribosomal RNA. The protein is Small ribosomal subunit protein uS19 of Mycoplasmopsis agalactiae (strain NCTC 10123 / CIP 59.7 / PG2) (Mycoplasma agalactiae).